We begin with the raw amino-acid sequence, 194 residues long: dCTP deaminase (194 aa).

DCTP contacts are provided by residues 110–115 (RSSLAR), D128, 136–138 (VLE), Y171, K178, and Q182. E138 acts as the Proton donor/acceptor in catalysis. Residues 173 to 194 (SRQDAKYKNQQSAVASRINQDR) are disordered. Positions 180-194 (KNQQSAVASRINQDR) are enriched in polar residues.

The protein belongs to the dCTP deaminase family. In terms of assembly, homotrimer.

It carries out the reaction dCTP + H2O + H(+) = dUTP + NH4(+). It functions in the pathway pyrimidine metabolism; dUMP biosynthesis; dUMP from dCTP (dUTP route): step 1/2. Functionally, catalyzes the deamination of dCTP to dUTP. The protein is dCTP deaminase of Actinobacillus succinogenes (strain ATCC 55618 / DSM 22257 / CCUG 43843 / 130Z).